The sequence spans 147 residues: Protein LOL4 (147 aa).

3 putative zinc finger regions span residues 4–34 (QLIC…LTAV), 44–74 (ELIC…LNST), and 82–112 (HLTC…VNHV).

The protein localises to the nucleus. Its function is as follows. Putative zinc finger that may be involved in programmed cell death and defense response. In Oryza sativa subsp. japonica (Rice), this protein is Protein LOL4 (LOL4).